The chain runs to 399 residues: MGIIERIKEIEAEMARTQKNKATEYHLGQLKAKIAKLRTQLLEPPKGASGGGEGFEVTKYGHGRVALIGFPSVGKSTLLTMLTGTHSEAASYEFTTLTCIPGVIHYNDTKIQLLDLPGIIEGASEGKGRGRQVIAVAKSSDLVLMVLDASKSEGHRQILTKELEAVGLRLNKTPPQIYFKKKKTGGISFNTTAPLTHIDEKLCYQILHEYKIHNAEVLFRENATVDDFIDVIEGNRKYIKCVYVYNKIDVVGIDDVDRLSRQPNSIVISCNLKLNLDRLLARMWDEMGLVRVYSKPQGQQPDFDEPFVLSSDRGGCTVEDFCNHVHRTLVKDMKYALVWGTSTRHNPQNCGLSQHLEDEDVVQIVKKKERDEGGRGRFKSHSNAPARIADREKKAPLKQ.

Residues 63–288 (GRVALIGFPS…LLARMWDEMG (226 aa)) enclose the OBG-type G domain. GTP is bound by residues 69–76 (GFPSVGKS), 115–119 (DLPGI), and 246–249 (NKID). Residues 288–366 (GLVRVYSKPQ…EDEDVVQIVK (79 aa)) form the TGS domain. Residues 367-399 (KKERDEGGRGRFKSHSNAPARIADREKKAPLKQ) form a disordered region. A compositionally biased stretch (basic and acidic residues) spans 388 to 399 (IADREKKAPLKQ).

It belongs to the TRAFAC class OBG-HflX-like GTPase superfamily. OBG GTPase family. As to expression, expressed in actively growing tissues and reproductive organs. Mostly expressed in leaves, stems and siliques. Also present in flowers and flower buds, and, to a lower extent, in roots.

It localises to the cytoplasmic vesicle. The protein resides in the cytoplasm. Binds GDP and GTP, and has low GTPase activity. May interact with phosphatidic acid (PA). The protein is Developmentally-regulated G-protein 1 (DRG1) of Arabidopsis thaliana (Mouse-ear cress).